Reading from the N-terminus, the 355-residue chain is tRNA pseudouridine synthase D (355 aa).

Catalysis depends on aspartate 84, which acts as the Nucleophile. The 147-residue stretch at 160–306 (GVPNYFGLQR…MAHERRILRL (147 aa)) folds into the TRUD domain.

The protein belongs to the pseudouridine synthase TruD family.

It carries out the reaction uridine(13) in tRNA = pseudouridine(13) in tRNA. In terms of biological role, responsible for synthesis of pseudouridine from uracil-13 in transfer RNAs. In Pseudomonas aeruginosa (strain LESB58), this protein is tRNA pseudouridine synthase D.